Consider the following 64-residue polypeptide: Alpha-conotoxin-like Lt1.3 (64 aa).

Positions 1–21 (MGMRMMFTMFLLVVLTTTVVS) are cleaved as a signal peptide. A propeptide spanning residues 22–45 (FNLDRESNHENRRTSNQITRGMWD) is cleaved from the precursor. 2 disulfide bridges follow: Cys47-Cys53 and Cys48-Cys61. The segment at 49-51 (DDP) is lacks the Ser-Xaa-Pro motif that is crucial for potent interaction with nAChR.

This sequence belongs to the conotoxin A superfamily. Expressed by the venom duct.

Its subcellular location is the secreted. Alpha-conotoxins act on postsynaptic membranes, they bind to the nicotinic acetylcholine receptors (nAChR) and thus inhibit them. Has possibly a distinct nAChR binding mode from other alpha-conotoxins, due to a different three residue motif (lacks the Ser-Xaa-Pro motif). The protein is Alpha-conotoxin-like Lt1.3 of Conus litteratus (Lettered cone).